Consider the following 540-residue polypeptide: Cytochrome P450 monooxygenase ptmG (540 aa).

An N-linked (GlcNAc...) asparagine glycan is attached at Asn-17. Helical transmembrane passes span 20–40 and 325–345; these read VMTLGQILVIPVALLVVYICI and AAFLIGATSGASVISYAFLLL. Cys-474 contacts heme.

The protein belongs to the cytochrome P450 family. The cofactor is heme.

The protein resides in the membrane. Its pathway is secondary metabolite biosynthesis. In terms of biological role, cytochrome P450 monooxygenase; part of the gene cluster that mediates the biosynthesis of the indole diterpenes penitrems. The geranylgeranyl diphosphate (GGPP) synthase ptmG catalyzes the first step in penitrem biosynthesis via conversion of farnesyl pyrophosphate and isopentyl pyrophosphate into geranylgeranyl pyrophosphate (GGPP). Condensation of indole-3-glycerol phosphate with GGPP by the prenyl transferase ptmC then forms 3-geranylgeranylindole (3-GGI). Epoxidation by the FAD-dependent monooxygenase ptmM leads to a epoxidized-GGI that is substrate of the terpene cyclase ptmB for cyclization to yield paspaline. Paspaline is subsequently converted to 13-desoxypaxilline by the cytochrome P450 monooxygenase ptmP, the latter being then converted to paxilline by the cytochrome P450 monooxygenase ptmQ. Paxilline is converted to beta-paxitriol via C-10 ketoreduction by the short-chain dehydrogenase ptmH which can be monoprenylated at the C-20 by the indole diterpene prenyltransferase ptmD. A two-step elimination (acetylation and elimination) process performed by the O-acetyltransferase ptmV and ptmI leads to the production of the prenylated form of penijanthine. The FAD-linked oxidoreductase ptmO then converts the prenylated form of penijanthine into PC-M5 which is in turn transformed into PC-M4 by the aromatic dimethylallyltransferase ptmE. Five sequential oxidative transformations performed by the cytochrome P450 monooxygenases ptmK, ptmU, ptmL, ptmN and ptmJ yield the various penitrem compounds. PtmK, ptmU and ptmM are involved in the formation of the key bicyclic ring of penitrem C via the formation of the intermediates secopenitrem D and penitrem D. PtmL catalyzes the epoxidation of penitrem D and C to yield penitrem B and F, respectively. PtmJ catalyzes the last benzylic hydroxylation to convert penitrem B to prenitrem E and penitrem F to penitrem A. This chain is Cytochrome P450 monooxygenase ptmG, found in Penicillium ochrochloron.